A 292-amino-acid chain; its full sequence is Protein PHR1-LIKE 3 (292 aa).

The 61-residue stretch at 34 to 94 (TDPKPRLRWT…HLQKFRLGRQ (61 aa)) folds into the HTH myb-type domain. Positions 65–90 (PKTIMRTMGVKGLTLYHLKSHLQKFR) form a DNA-binding region, H-T-H motif. The stretch at 137–157 (TEALRAQMEVQRRLHEQLEVQ) forms a coiled coil. The LHEQLE signature appears at 150–155 (LHEQLE).

This sequence belongs to the MYB-CC family. As to quaternary structure, homo- and heterodimers. Interacts with PHL2, but not with PHR1.

The protein resides in the nucleus. Functionally, transcriptional activator. Probable component of the central regulatory system controlling transcriptional responses to Pi starvation. Binds in a sequence-specific manner to phosphate starvation-regulated promoters. Required for female gametophyte development and function. The protein is Protein PHR1-LIKE 3 of Arabidopsis thaliana (Mouse-ear cress).